Reading from the N-terminus, the 1584-residue chain is Adhesion G protein-coupled receptor B1 (1584 aa).

The signal sequence occupies residues 1 to 30 (MRGQAAAPGPVWILAPLLLLLLLLGRRARA). Residues 31–948 (AAGADAGPGP…ANMEKATLPS (918 aa)) are Extracellular-facing. An N-linked (GlcNAc...) asparagine glycan is attached at Asn64. The interval 146 to 167 (RRQQPPQHDGLRPRAGPPGPTD) is disordered. The 55-residue stretch at 261-315 (TGGWKLWSLWGECTRDCGGGLQTRTRTCLPAPGVEGGGCEGVLEEGRQCNREACG) folds into the TSP type-1 1 domain. Disulfide bonds link Cys273-Cys309, Cys277-Cys314, and Cys288-Cys299. Positions 313 to 335 (ACGPAGRTSSRSQSLRSTDARRR) are disordered. The segment covering 319-329 (RTSSRSQSLRS) has biased composition (low complexity). TSP type-1 domains lie at 354–407 (DPAA…AVCP), 409–462 (HGAW…ALCP), 467–520 (DGNW…QQCP), and 522–575 (DGKW…QRCP). 14 cysteine pairs are disulfide-bonded: Cys366/Cys400, Cys370/Cys406, Cys381/Cys390, Cys421/Cys456, Cys425/Cys461, Cys436/Cys446, Cys479/Cys514, Cys483/Cys519, Cys494/Cys504, Cys534/Cys569, Cys538/Cys574, Cys549/Cys559, Cys581/Cys616, and Cys604/Cys634. N-linked (GlcNAc...) asparagine glycosylation is present at Asn401. Asn607 carries N-linked (GlcNAc...) asparagine glycosylation. Thr609 is subject to Phosphothreonine. 4 N-linked (GlcNAc...) asparagine glycosylation sites follow: Asn692, Asn844, Asn877, and Asn881. Residues 760–939 (RDAYQVTDNL…AILAQLSADA (180 aa)) form the GAIN-B domain. 2 disulfides stabilise this stretch: Cys884/Cys921 and Cys909/Cys923. The interval 884–939 (CILWDETDVPSSSAPPQLGPWSWRGCRTVPLDALRTRCLCDRLSTFAILAQLSADA) is GPS. The segment at 927-943 (STFAILAQLSADANMEK) is N-terminal stalk following vasculostatin-120 cleavage which is not required for signaling activity. Residues 949–969 (VTLIVGCGVSSLTLLMLVIIY) form a helical membrane-spanning segment. The Cytoplasmic portion of the chain corresponds to 970-980 (VSVWRYIRSER). The helical transmembrane segment at 981 to 1001 (SVILINFCLSIISSNALILIG) threads the bilayer. Over 1002 to 1008 (QTQTRNK) the chain is Extracellular. A helical transmembrane segment spans residues 1009–1029 (VVCTLVAAFLHFFFLSSFCWV). Residues 1030–1052 (LTEAWQSYMAVTGHLRNRLIRKR) are Cytoplasmic-facing. Residues 1053–1073 (FLCLGWGLPALVVAISVGFTK) traverse the membrane as a helical segment. The Extracellular segment spans residues 1074–1093 (AKGYSTMNYCWLSLEGGLLY). A helical membrane pass occupies residues 1094–1114 (AFVGPAAAVVLVNMVIGILVF). Residues 1115-1136 (NKLVSKDGITDKKLKERAGASL) are Cytoplasmic-facing. The helical transmembrane segment at 1137 to 1157 (WSSCVVLPLLALTWMSAVLAV) threads the bilayer. At 1158-1166 (TDRRSALFQ) the chain is on the extracellular side. The helical transmembrane segment at 1167–1187 (ILFAVFDSLEGFVIVMVHCIL) threads the bilayer. Residues 1188 to 1584 (RREVQDAVKC…QDIIDLQTEV (397 aa)) are Cytoplasmic-facing. The tract at residues 1365–1584 (YSIHIDQMPQ…QDIIDLQTEV (220 aa)) is involved in interaction with MAGI1. Disordered stretches follow at residues 1385–1475 (EASL…RRKS) and 1501–1548 (RKLQ…KKEL). Residues 1391–1439 (RSPPSRQPPSGGPPEAPPAQPPPPPPPPPPPPQQPLPPPPNLEPAPPSL) are compositionally biased toward pro residues. A compositionally biased stretch (polar residues) spans 1453-1469 (TGPSTKNENVATLSVSS). Position 1469 is a phosphoserine (Ser1469). Basic and acidic residues predominate over residues 1501-1522 (RKLQHAAEKDKEVLGPDSKPEK). An indispensable for interaction with MAGI1 region spans residues 1581–1584 (QTEV).

This sequence belongs to the G-protein coupled receptor 2 family. LN-TM7 subfamily. In terms of assembly, interacts with ELMO1 and DOCK. When bound to ELMO1 and DOCK1, acts as a module to promote apoptotic cell engulfment. Interacts with MDM2; the interaction results in inhibition of MDM2-mediated ubiquitination and degradation of DLG4/PSD95. Interacts with PARD3 and TIAM1; the interaction is required for correct dendritic. localization of PARD3 and TIAM1 and for dendritic spine formation. Interacts with MAGI1. Interacts with MAGI3. Interacts with BAIAP2. Interacts with PHYHIP. Interacts with DLG4 (via PDZ domain). Vasculostatin-120: Interacts with CD36. Vasculostatin-120: Interacts with ARRB2. Interacts with BAIAP3; this interaction is direct. Post-translationally, proteolytically cleaved to produce vasculostatin-40 and vasculostatin-120. Vasculostatin-40 is the major form and is produced through proteolytic cleavage by MMP14 between residues 321 and 329 with cleavage likely to be between Ser-326 and Leu-327. Ubiquitinated. As to expression, expressed in brain (at protein level). Expressed on mononuclear phagocytes and monocyte-derived macrophages in the gastric mucosa (at protein level). Expressed in normal pancreatic tissue but not in pancreatic tumor tissue. Reduced or no expression is observed in some glioblastomas.

It is found in the cell membrane. The protein localises to the cell projection. Its subcellular location is the phagocytic cup. It localises to the cell junction. The protein resides in the focal adhesion. It is found in the dendritic spine. The protein localises to the postsynaptic density. Its subcellular location is the secreted. Phosphatidylserine receptor which enhances the engulfment of apoptotic cells. Also mediates the binding and engulfment of Gram-negative bacteria. Stimulates production of reactive oxygen species by macrophages in response to Gram-negative bacteria, resulting in enhanced microbicidal macrophage activity. In the gastric mucosa, required for recognition and engulfment of apoptotic gastric epithelial cells. Promotes myoblast fusion. Activates the Rho pathway in a G-protein-dependent manner. Inhibits MDM2-mediated ubiquitination and degradation of DLG4/PSD95, promoting DLG4 stability and regulating synaptic plasticity. Required for the formation of dendritic spines by ensuring the correct localization of PARD3 and TIAM1. Potent inhibitor of angiogenesis in brain and may play a significant role as a mediator of the p53/TP53 signal in suppression of glioblastoma. Functionally, inhibits angiogenesis in a CD36-dependent manner. In terms of biological role, inhibits angiogenesis. This chain is Adhesion G protein-coupled receptor B1, found in Homo sapiens (Human).